Here is a 223-residue protein sequence, read N- to C-terminus: Deoxyribose-phosphate aldolase (223 aa).

Asp-91 acts as the Proton donor/acceptor in catalysis. Lys-153 serves as the catalytic Schiff-base intermediate with acetaldehyde. Lys-182 serves as the catalytic Proton donor/acceptor.

It belongs to the DeoC/FbaB aldolase family. DeoC type 1 subfamily.

The protein resides in the cytoplasm. The enzyme catalyses 2-deoxy-D-ribose 5-phosphate = D-glyceraldehyde 3-phosphate + acetaldehyde. Its pathway is carbohydrate degradation; 2-deoxy-D-ribose 1-phosphate degradation; D-glyceraldehyde 3-phosphate and acetaldehyde from 2-deoxy-alpha-D-ribose 1-phosphate: step 2/2. Catalyzes a reversible aldol reaction between acetaldehyde and D-glyceraldehyde 3-phosphate to generate 2-deoxy-D-ribose 5-phosphate. The protein is Deoxyribose-phosphate aldolase of Streptococcus pyogenes serotype M3 (strain ATCC BAA-595 / MGAS315).